Reading from the N-terminus, the 208-residue chain is Small ribosomal subunit protein eS8 (208 aa).

The disordered stretch occupies residues 1–23 (MGISRDSAHKRRATGGKRKSLRK). The segment covering 8 to 23 (AHKRRATGGKRKSLRK) has biased composition (basic residues).

It belongs to the eukaryotic ribosomal protein eS8 family. As to quaternary structure, component of the small ribosomal subunit. Identified in a IGF2BP1-dependent mRNP granule complex containing untranslated mRNAs. Part of the small subunit (SSU) processome, composed of more than 70 proteins and the RNA chaperone small nucleolar RNA (snoRNA) U3.

It localises to the cytoplasm. The protein resides in the membrane. The protein localises to the nucleus. It is found in the nucleolus. Its function is as follows. Component of the small ribosomal subunit. The ribosome is a large ribonucleoprotein complex responsible for the synthesis of proteins in the cell. Part of the small subunit (SSU) processome, first precursor of the small eukaryotic ribosomal subunit. During the assembly of the SSU processome in the nucleolus, many ribosome biogenesis factors, an RNA chaperone and ribosomal proteins associate with the nascent pre-rRNA and work in concert to generate RNA folding, modifications, rearrangements and cleavage as well as targeted degradation of pre-ribosomal RNA by the RNA exosome. This is Small ribosomal subunit protein eS8 (RpS8) from Drosophila melanogaster (Fruit fly).